Consider the following 230-residue polypeptide: Cytochrome c oxidase subunit 2 (230 aa).

Residues 1–14 (MAHPTQLGFQDAAS) are Mitochondrial intermembrane-facing. Residues 15-45 (PVMEELLHFHDHALMIVFLISTLVLYIIIAM) form a helical membrane-spanning segment. Residues 46–59 (VSTKLTNKYILDSQ) lie on the Mitochondrial matrix side of the membrane. The chain crosses the membrane as a helical span at residues 60–87 (EIEIVWTILPAVILVLIALPSLRILYLM). The Mitochondrial intermembrane segment spans residues 88–230 (DEINDPHLTI…NWSSLMLEDA (143 aa)). The Cu cation site is built by histidine 161, cysteine 196, glutamate 198, cysteine 200, histidine 204, and methionine 207. Position 198 (glutamate 198) interacts with Mg(2+).

Belongs to the cytochrome c oxidase subunit 2 family. In terms of assembly, component of the cytochrome c oxidase (complex IV, CIV), a multisubunit enzyme composed of 14 subunits. The complex is composed of a catalytic core of 3 subunits MT-CO1, MT-CO2 and MT-CO3, encoded in the mitochondrial DNA, and 11 supernumerary subunits COX4I, COX5A, COX5B, COX6A, COX6B, COX6C, COX7A, COX7B, COX7C, COX8 and NDUFA4, which are encoded in the nuclear genome. The complex exists as a monomer or a dimer and forms supercomplexes (SCs) in the inner mitochondrial membrane with NADH-ubiquinone oxidoreductase (complex I, CI) and ubiquinol-cytochrome c oxidoreductase (cytochrome b-c1 complex, complex III, CIII), resulting in different assemblies (supercomplex SCI(1)III(2)IV(1) and megacomplex MCI(2)III(2)IV(2)). Found in a complex with TMEM177, COA6, COX18, COX20, SCO1 and SCO2. Interacts with TMEM177 in a COX20-dependent manner. Interacts with COX20. Interacts with COX16. Requires Cu cation as cofactor.

The protein resides in the mitochondrion inner membrane. It catalyses the reaction 4 Fe(II)-[cytochrome c] + O2 + 8 H(+)(in) = 4 Fe(III)-[cytochrome c] + 2 H2O + 4 H(+)(out). Functionally, component of the cytochrome c oxidase, the last enzyme in the mitochondrial electron transport chain which drives oxidative phosphorylation. The respiratory chain contains 3 multisubunit complexes succinate dehydrogenase (complex II, CII), ubiquinol-cytochrome c oxidoreductase (cytochrome b-c1 complex, complex III, CIII) and cytochrome c oxidase (complex IV, CIV), that cooperate to transfer electrons derived from NADH and succinate to molecular oxygen, creating an electrochemical gradient over the inner membrane that drives transmembrane transport and the ATP synthase. Cytochrome c oxidase is the component of the respiratory chain that catalyzes the reduction of oxygen to water. Electrons originating from reduced cytochrome c in the intermembrane space (IMS) are transferred via the dinuclear copper A center (CU(A)) of subunit 2 and heme A of subunit 1 to the active site in subunit 1, a binuclear center (BNC) formed by heme A3 and copper B (CU(B)). The BNC reduces molecular oxygen to 2 water molecules using 4 electrons from cytochrome c in the IMS and 4 protons from the mitochondrial matrix. The chain is Cytochrome c oxidase subunit 2 (mt-co2) from Carassius auratus (Goldfish).